Reading from the N-terminus, the 281-residue chain is Hexaprenyl pyrophosphate synthase (281 aa).

Residues Lys42, Arg45, and His74 each contribute to the isopentenyl diphosphate site. The Mg(2+) site is built by Asp81 and Asp85. Arg91 is an isopentenyl diphosphate binding site.

This sequence belongs to the FPP/GGPP synthase family. As to quaternary structure, homodimer. Mg(2+) serves as cofactor.

The catalysed reaction is 2 isopentenyl diphosphate + (2E,6E,10E)-geranylgeranyl diphosphate = all-trans-hexaprenyl diphosphate + 2 diphosphate. In terms of biological role, catalyzes consecutive E-type condensation of two isopentenyl pyrophosphate (IPP) molecules with an allylic substrate such as geranylgeranyl diphosphate (GGPP), farnesyl diphosphate (FPP) or geranyl diphosphate (GPP) to yield the medium-chain product trans-C30-hexaprenyl pyrophosphate (HexPP). GGPP is the physiological substrate. The chain is Hexaprenyl pyrophosphate synthase (gdS-2) from Saccharolobus solfataricus (strain ATCC 35092 / DSM 1617 / JCM 11322 / P2) (Sulfolobus solfataricus).